A 440-amino-acid polypeptide reads, in one-letter code: Gap junction alpha-8 protein (440 aa).

The stretch at 2 to 12 (GDWSFLGNILE) is an intramembrane region. Topologically, residues 13–21 (EVNEHSTVI) are cytoplasmic. The chain crosses the membrane as a helical span at residues 22 to 42 (GRVWLTVLFIFRILILGTAAE). Topologically, residues 43–71 (FVWGDEQSDFVCNTQQPGCENVCYDEAFP) are extracellular. Intrachain disulfides connect Cys54-Cys201, Cys61-Cys195, and Cys65-Cys190. Residues 72–92 (ISHIRLWVLQIIFVSTPSLMY) traverse the membrane as a helical segment. Topologically, residues 93–161 (VGHAVHHVRM…GTLLRTYVCH (69 aa)) are cytoplasmic. The disordered stretch occupies residues 111–143 (AEELCQQSRSNGGERVPIAPDQASIRKSSSSSK). A helical membrane pass occupies residues 162–182 (IIFKTLFEVGFIVGHYFLYGF). At 183 to 210 (RILPLYRCSRWPCPNVVDCFVSRPTEKT) the chain is on the extracellular side. The helical transmembrane segment at 211-231 (IFILFMLSVAFVSLFLNIMEM) threads the bilayer. Residues 232-440 (SHLGMKGIRS…SRARSDDLTI (209 aa)) are Cytoplasmic-facing. Residues 338–440 (VEREEPPIEE…SRARSDDLTI (103 aa)) are disordered. Composition is skewed to basic and acidic residues over residues 353–364 (VGEKKQEAEKVA) and 374–399 (PDRERVETPGVGKEDEKEELQAEKVT). The segment covering 423-432 (LSRLSKASSR) has biased composition (low complexity).

Belongs to the connexin family. Alpha-type (group II) subfamily. As to quaternary structure, a hemichannel or connexon is composed of a hexamer of connexins. A functional gap junction is formed by the apposition of two hemichannels. Forms heteromeric channels with GJA3. In terms of tissue distribution, detected in eye lens (at protein level). Eye lens.

It is found in the cell membrane. Its subcellular location is the cell junction. It localises to the gap junction. Functionally, structural component of eye lens gap junctions. Gap junctions are dodecameric channels that connect the cytoplasm of adjoining cells. They are formed by the docking of two hexameric hemichannels, one from each cell membrane. Small molecules and ions diffuse from one cell to a neighboring cell via the central pore. The chain is Gap junction alpha-8 protein (Gja8) from Mus musculus (Mouse).